Consider the following 134-residue polypeptide: Profilin-2 (134 aa).

Cysteine 13 and cysteine 118 are oxidised to a cystine. An Involved in PIP2 interaction motif is present at residues 84–100 (AVIRGKKGSGGITIKKT). Threonine 114 carries the post-translational modification Phosphothreonine.

This sequence belongs to the profilin family. In terms of assembly, occurs in many kinds of cells as a complex with monomeric actin in a 1:1 ratio. Post-translationally, phosphorylated by MAP kinases.

Its subcellular location is the cytoplasm. The protein localises to the cytoskeleton. Its function is as follows. Binds to actin and affects the structure of the cytoskeleton. At high concentrations, profilin prevents the polymerization of actin, whereas it enhances it at low concentrations. By binding to PIP2, it inhibits the formation of IP3 and DG. In Olea europaea (Common olive), this protein is Profilin-2 (PRO2).